The primary structure comprises 283 residues: MLRRQARERREYLYRKAQELQESQLQQKRDLIKQALAQGKPLPKEVADDTKLQRDYQYDESAQESIDDEYSALSGIVDPKVIVTTSRDPSTRLSQFAKEVKLLFPTSVRLNRGNYIMKNLVDACQKSGTTDLVVLHEHRGVPTALTISHFPHGPTASFSLHNVVLRHDILNAGNQSEVHPHLIFDNFTTPLGQRVVKILKHMFPPGVKKDSPRVITFANRGDFISVRQHVYVKTRDGVELAEVGPRFEMKLYELTLGTLENKDADVEWQLRRFVRTANRKDYL.

In terms of domain architecture, Brix spans Pro79–Glu260.

As to quaternary structure, component of a heterotrimeric complex containing IMP3, IMP4 and MPP10.

The protein localises to the nucleus. Its subcellular location is the nucleolus. Its function is as follows. Component of the U3 small nucleolar ribonucleoprotein. Required for the early cleavages at sites A0, A1 and A2 during 18S ribosomal pre-RNA processing. The chain is U3 small nucleolar ribonucleoprotein protein IMP4 (IMP4) from Eremothecium gossypii (strain ATCC 10895 / CBS 109.51 / FGSC 9923 / NRRL Y-1056) (Yeast).